The primary structure comprises 89 residues: MHRNDFTCFTQSVYTKKDGSVESQICCLTNRIVKLTRHFQTHRKDYSSQRGLWKILGRRKRLLIYLLQTDAIGYRDLTTQLKIRKLKKK.

This sequence belongs to the universal ribosomal protein uS15 family. Part of the 30S ribosomal subunit.

Its subcellular location is the plastid. The polypeptide is Small ribosomal subunit protein uS15c (rps15) (Aneura mirabilis (Parasitic liverwort)).